The chain runs to 144 residues: 3-hydroxyacyl-[acyl-carrier-protein] dehydratase FabZ (144 aa).

H48 is an active-site residue.

The protein belongs to the thioester dehydratase family. FabZ subfamily.

It localises to the cytoplasm. The catalysed reaction is a (3R)-hydroxyacyl-[ACP] = a (2E)-enoyl-[ACP] + H2O. In terms of biological role, involved in unsaturated fatty acids biosynthesis. Catalyzes the dehydration of short chain beta-hydroxyacyl-ACPs and long chain saturated and unsaturated beta-hydroxyacyl-ACPs. The chain is 3-hydroxyacyl-[acyl-carrier-protein] dehydratase FabZ from Chloroflexus aggregans (strain MD-66 / DSM 9485).